We begin with the raw amino-acid sequence, 139 residues long: Large-conductance mechanosensitive channel (139 aa).

3 helical membrane-spanning segments follow: residues 14-34, 38-58, and 82-102; these read VVDLAVGVIIGAAFGAIVNSA, IFMPVIGAITGGLDFSNYYIP, and GQFLTLTLNFAIVAFVLFLVI.

It belongs to the MscL family. In terms of assembly, homopentamer.

The protein localises to the cell inner membrane. In terms of biological role, channel that opens in response to stretch forces in the membrane lipid bilayer. May participate in the regulation of osmotic pressure changes within the cell. In Methylobacterium radiotolerans (strain ATCC 27329 / DSM 1819 / JCM 2831 / NBRC 15690 / NCIMB 10815 / 0-1), this protein is Large-conductance mechanosensitive channel.